We begin with the raw amino-acid sequence, 221 residues long: PKHD-type hydroxylase PMN2A_0775 (221 aa).

Residues 80–174 form the Fe2OG dioxygenase domain; the sequence is LIHGVMFTQS…RHVCVGWIQS (95 aa). His98, Asp100, and His155 together coordinate Fe cation. A 2-oxoglutarate-binding site is contributed by Arg165.

Fe(2+) is required as a cofactor. L-ascorbate serves as cofactor.

The chain is PKHD-type hydroxylase PMN2A_0775 from Prochlorococcus marinus (strain NATL2A).